A 121-amino-acid chain; its full sequence is Non-specific lipid-transfer protein 9 (121 aa).

Residues 1 to 27 form the signal peptide; the sequence is MRKSISIAFVIAITIFMSHLNVFTVYS. Intrachain disulfides connect Cys-31/Cys-80, Cys-41/Cys-57, Cys-58/Cys-102, and Cys-78/Cys-116.

The protein belongs to the plant LTP family.

Plant non-specific lipid-transfer proteins transfer phospholipids as well as galactolipids across membranes. May play a role in wax or cutin deposition in the cell walls of expanding epidermal cells and certain secretory tissues. The polypeptide is Non-specific lipid-transfer protein 9 (LTP9) (Arabidopsis thaliana (Mouse-ear cress)).